A 201-amino-acid polypeptide reads, in one-letter code: Putative manganese efflux pump MntP (201 aa).

Transmembrane regions (helical) follow at residues 6–26 (CLAV…ATGI), 39–59 (LAFH…TLGL), 105–125 (LTLI…GLSL), 127–147 (VLGI…LLFT), and 169–189 (LAGG…HGVF).

It belongs to the MntP (TC 9.B.29) family.

Its subcellular location is the cell inner membrane. Probably functions as a manganese efflux pump. This chain is Putative manganese efflux pump MntP, found in Nitratidesulfovibrio vulgaris (strain ATCC 29579 / DSM 644 / CCUG 34227 / NCIMB 8303 / VKM B-1760 / Hildenborough) (Desulfovibrio vulgaris).